Here is a 583-residue protein sequence, read N- to C-terminus: 2-succinyl-5-enolpyruvyl-6-hydroxy-3-cyclohexene-1-carboxylate synthase (583 aa).

Belongs to the TPP enzyme family. MenD subfamily. As to quaternary structure, homodimer. Requires Mg(2+) as cofactor. Mn(2+) is required as a cofactor. The cofactor is thiamine diphosphate.

It carries out the reaction isochorismate + 2-oxoglutarate + H(+) = 5-enolpyruvoyl-6-hydroxy-2-succinyl-cyclohex-3-ene-1-carboxylate + CO2. The protein operates within quinol/quinone metabolism; 1,4-dihydroxy-2-naphthoate biosynthesis; 1,4-dihydroxy-2-naphthoate from chorismate: step 2/7. It participates in cofactor biosynthesis; phylloquinone biosynthesis. Its function is as follows. Catalyzes the thiamine diphosphate-dependent decarboxylation of 2-oxoglutarate and the subsequent addition of the resulting succinic semialdehyde-thiamine pyrophosphate anion to isochorismate to yield 2-succinyl-5-enolpyruvyl-6-hydroxy-3-cyclohexene-1-carboxylate (SEPHCHC). The polypeptide is 2-succinyl-5-enolpyruvyl-6-hydroxy-3-cyclohexene-1-carboxylate synthase (Nostoc sp. (strain PCC 7120 / SAG 25.82 / UTEX 2576)).